A 178-amino-acid polypeptide reads, in one-letter code: Fucolectin-1 (178 aa).

The first 20 residues, 1 to 20, serve as a signal peptide directing secretion; sequence MKVKTIMLLFQILAISTIKS. The tract at residues 29 to 178 is F5/8 type C-like; it reads QENVAVRGKA…VEVNALLPVN (150 aa). Ca(2+) is bound by residues Asp59, Asn61, and Ser70. 3 disulfides stabilise this stretch: Cys71–Cys167, Cys103–Cys104, and Cys129–Cys145. Alpha-L-fucose is bound by residues His73 and Arg100. The short motif at 100–102 is the Cell attachment site element; the sequence is RGD. Arg107 contacts alpha-L-fucose. 2 residues coordinate Ca(2+): Cys167 and Glu168.

The protein belongs to the fucolectin family. In terms of assembly, homotrimer. As to expression, parenchymal hepatocytes.

It localises to the secreted. It is found in the extracellular space. In terms of biological role, acts as a defensive agent. Recognizes blood group fucosylated oligosaccharides including A, B, H and Lewis B-type antigens. Does not recognize Lewis A antigen and has low affinity for monovalent haptens. The sequence is that of Fucolectin-1 from Anguilla japonica (Japanese eel).